The primary structure comprises 240 residues: tRNA1(Val) (adenine(37)-N6)-methyltransferase (240 aa).

Belongs to the methyltransferase superfamily. tRNA (adenine-N(6)-)-methyltransferase family.

The protein resides in the cytoplasm. The catalysed reaction is adenosine(37) in tRNA1(Val) + S-adenosyl-L-methionine = N(6)-methyladenosine(37) in tRNA1(Val) + S-adenosyl-L-homocysteine + H(+). Its function is as follows. Specifically methylates the adenine in position 37 of tRNA(1)(Val) (anticodon cmo5UAC). The chain is tRNA1(Val) (adenine(37)-N6)-methyltransferase from Dyadobacter fermentans (strain ATCC 700827 / DSM 18053 / CIP 107007 / KCTC 52180 / NS114).